A 263-amino-acid polypeptide reads, in one-letter code: Phosphatidylglycerol--prolipoprotein diacylglyceryl transferase (263 aa).

4 consecutive transmembrane segments (helical) span residues 10-30 (VAITLGPLQFRWYGLMYLFGF), 56-76 (MVTYVILGVVLGGRIGYILFY), 91-111 (IWNGGMSFHGGLLGVVFAMWL), and 117-137 (GLGFMDVSDFVAPLIPPGLFF). An a 1,2-diacyl-sn-glycero-3-phospho-(1'-sn-glycerol)-binding site is contributed by Arg-139. Transmembrane regions (helical) follow at residues 171–191 (PSQLYECALEGVILFLALWVF), 199–219 (GHVSGLFALLYGVFRFTVEFV), and 231–251 (FGWLTMGQVLCLPLIMLGLWL).

Belongs to the Lgt family.

The protein localises to the cell inner membrane. The catalysed reaction is L-cysteinyl-[prolipoprotein] + a 1,2-diacyl-sn-glycero-3-phospho-(1'-sn-glycerol) = an S-1,2-diacyl-sn-glyceryl-L-cysteinyl-[prolipoprotein] + sn-glycerol 1-phosphate + H(+). Its pathway is protein modification; lipoprotein biosynthesis (diacylglyceryl transfer). In terms of biological role, catalyzes the transfer of the diacylglyceryl group from phosphatidylglycerol to the sulfhydryl group of the N-terminal cysteine of a prolipoprotein, the first step in the formation of mature lipoproteins. This chain is Phosphatidylglycerol--prolipoprotein diacylglyceryl transferase, found in Nitratidesulfovibrio vulgaris (strain DP4) (Desulfovibrio vulgaris).